The primary structure comprises 287 residues: Lipoyl synthase (287 aa).

Cys-38, Cys-43, Cys-49, Cys-64, Cys-68, Cys-71, and Ser-277 together coordinate [4Fe-4S] cluster. Residues 50–266 enclose the Radical SAM core domain; that stretch reads WSRGTATFLL…KTVAESLGLR (217 aa).

This sequence belongs to the radical SAM superfamily. Lipoyl synthase family. [4Fe-4S] cluster serves as cofactor.

It is found in the cytoplasm. The catalysed reaction is [[Fe-S] cluster scaffold protein carrying a second [4Fe-4S](2+) cluster] + N(6)-octanoyl-L-lysyl-[protein] + 2 oxidized [2Fe-2S]-[ferredoxin] + 2 S-adenosyl-L-methionine + 4 H(+) = [[Fe-S] cluster scaffold protein] + N(6)-[(R)-dihydrolipoyl]-L-lysyl-[protein] + 4 Fe(3+) + 2 hydrogen sulfide + 2 5'-deoxyadenosine + 2 L-methionine + 2 reduced [2Fe-2S]-[ferredoxin]. The protein operates within protein modification; protein lipoylation via endogenous pathway; protein N(6)-(lipoyl)lysine from octanoyl-[acyl-carrier-protein]: step 2/2. Catalyzes the radical-mediated insertion of two sulfur atoms into the C-6 and C-8 positions of the octanoyl moiety bound to the lipoyl domains of lipoate-dependent enzymes, thereby converting the octanoylated domains into lipoylated derivatives. This Chlorobium phaeobacteroides (strain DSM 266 / SMG 266 / 2430) protein is Lipoyl synthase.